A 323-amino-acid polypeptide reads, in one-letter code: MLSVNLASLPIVEDMINRKEELNLEVITLENGATVLDCGVNVMGSFEAGKLFTKICLGGLAHVGISISGSLDNKLVLPCVKIKTSHPAIATLGSQKAGWSVSVGKYFAMGSGPARALAMMPKATYEEIDYRDEADIAILCLESSQLPDENVADHVAEKCGVDVSKVYLLVAPTASMVGAVQISGRVVENGTYKMLEALHFDVRKVKFAAGIAPVAPVIGDDLKMMGATNDMVLYGGRTYYYVKSDEGDDIEKLCKSLPSCSAETYGKPFLEVFKEANYDFYKIDKGMFAPAVVTINDLRTGKLMSYGETNVEVLKKSLKFSQL.

This sequence belongs to the MCH family.

The protein localises to the cytoplasm. The enzyme catalyses 5,10-methenyl-5,6,7,8-tetrahydromethanopterin + H2O = N(5)-formyl-5,6,7,8-tetrahydromethanopterin + H(+). It functions in the pathway one-carbon metabolism; methanogenesis from CO(2); 5,10-methenyl-5,6,7,8-tetrahydromethanopterin from CO(2): step 3/3. Catalyzes the reversible interconversion of 5-formyl-H(4)MPT to methenyl-H(4)MPT(+). This chain is Methenyltetrahydromethanopterin cyclohydrolase, found in Methanococcus maripaludis (strain C7 / ATCC BAA-1331).